The primary structure comprises 206 residues: Platelet glycoprotein Ib beta chain (206 aa).

Positions 1–25 (MGSGPRGALSLLLLLLAPPSRPAAG) are cleaved as a signal peptide. 2 disulfides stabilise this stretch: Cys26–Cys32 and Cys30–Cys39. The 29-residue stretch at 27–55 (PAPCSCAGTLVDCGRRGLTWASLPTAFPV) folds into the LRRNT domain. Residues 27-147 (PAPCSCAGTL…RAACAPGPLC (121 aa)) lie on the Extracellular side of the membrane. One copy of the LRR repeat lies at 60–83 (LVLTGNNLTALPPGLLDALPALRT). N-linked (GlcNAc...) asparagine glycosylation is present at Asn66. Residues 89-143 (NPWRCDCRLVPLRAWLAGRPERAPYRDLRCVAPPALRGRLLPYLAEDELRAACAP) form the LRRCT domain. Disulfide bonds link Cys93/Cys118 and Cys95/Cys141. Residues 148 to 172 (WGALAAQLALLGLGLLHALLLVLLL) form a helical membrane-spanning segment. At 173-206 (CRLRRLRARARARAAARLSLTDPLVAERAGTDES) the chain is on the cytoplasmic side. Ser191 is modified (phosphoserine; by PKA). Thr193 carries the post-translational modification Phosphothreonine.

Two GP-Ib beta are disulfide-linked to one GP-Ib alpha. GP-IX is complexed with the GP-Ib heterodimer via a non covalent linkage. Interacts with TRAF4. Expressed in heart and brain.

It is found in the membrane. In terms of biological role, gp-Ib, a surface membrane protein of platelets, participates in the formation of platelet plugs by binding to von Willebrand factor, which is already bound to the subendothelium. The polypeptide is Platelet glycoprotein Ib beta chain (GP1BB) (Homo sapiens (Human)).